The following is a 518-amino-acid chain: Mitochondrial 2-methylisocitrate lyase (518 aa).

The protein belongs to the isocitrate lyase/PEP mutase superfamily. Isocitrate lyase family.

Its subcellular location is the mitochondrion matrix. The protein resides in the cytoplasm. It catalyses the reaction (2S,3R)-3-hydroxybutane-1,2,3-tricarboxylate = pyruvate + succinate. It participates in organic acid metabolism; propanoate degradation. Its function is as follows. Catalyzes the formation of pyruvate and succinate from 2-methylisocitrate during the metabolism of endogenous propionyl-CoA. Does not act on isocitrate. The protein is Mitochondrial 2-methylisocitrate lyase (icl2) of Schizosaccharomyces pombe (strain 972 / ATCC 24843) (Fission yeast).